A 178-amino-acid chain; its full sequence is ATP synthase subunit delta (178 aa).

The protein belongs to the ATPase delta chain family. In terms of assembly, F-type ATPases have 2 components, F(1) - the catalytic core - and F(0) - the membrane proton channel. F(1) has five subunits: alpha(3), beta(3), gamma(1), delta(1), epsilon(1). F(0) has three main subunits: a(1), b(2) and c(10-14). The alpha and beta chains form an alternating ring which encloses part of the gamma chain. F(1) is attached to F(0) by a central stalk formed by the gamma and epsilon chains, while a peripheral stalk is formed by the delta and b chains.

It localises to the cell membrane. Its function is as follows. F(1)F(0) ATP synthase produces ATP from ADP in the presence of a proton or sodium gradient. F-type ATPases consist of two structural domains, F(1) containing the extramembraneous catalytic core and F(0) containing the membrane proton channel, linked together by a central stalk and a peripheral stalk. During catalysis, ATP synthesis in the catalytic domain of F(1) is coupled via a rotary mechanism of the central stalk subunits to proton translocation. Functionally, this protein is part of the stalk that links CF(0) to CF(1). It either transmits conformational changes from CF(0) to CF(1) or is implicated in proton conduction. In Streptococcus pyogenes serotype M3 (strain ATCC BAA-595 / MGAS315), this protein is ATP synthase subunit delta.